Consider the following 167-residue polypeptide: MCSDFEEETSIQKFKRRLKEEPLIPLGCAATCYALYRAYRSGKAKDSVEMNRMFRARIYAQFFTLLAVVAGGMYYKTERKQRREFEKKVEERKAQEKRDAWLRELEARDKEDKGWKERHAAVSVTAKKETEGAVDKNVNQAPTEEVVEKRGTGILDAVKALVQGKKD.

Residues 1–86 (MCSDFEEETS…TERKQRREFE (86 aa)) enclose the HIG1 domain. 2 helical membrane passes run 21–38 (EPLI…LYRA) and 53–75 (MFRA…GMYY). Residues 75-107 (YKTERKQRREFEKKVEERKAQEKRDAWLRELEA) are a coiled coil.

The protein belongs to the RCF1 family. As to quaternary structure, associates with the respiratory chain complex III/complex IV supercomplex.

It localises to the mitochondrion membrane. Cytochrome c oxidase subunit which plays a role in assembly of respiratory supercomplexes. The protein is Respiratory supercomplex factor 1-A, mitochondrial (rcf1-A) of Talaromyces marneffei (strain ATCC 18224 / CBS 334.59 / QM 7333) (Penicillium marneffei).